The sequence spans 352 residues: Putative [LysW]-L-2-aminoadipate 6-phosphate reductase (352 aa).

11-14 (SGYT) provides a ligand contact to NADP(+). Residue Cys148 is part of the active site. Asn319 is an NADP(+) binding site.

The protein belongs to the NAGSA dehydrogenase family. Type 1 subfamily. LysY sub-subfamily.

Its subcellular location is the cytoplasm. It carries out the reaction [amino-group carrier protein]-C-terminal-N-(1-carboxy-5-oxopentan-1-yl)-L-glutamine + phosphate + NADP(+) = [amino-group carrier protein]-C-terminal-N-(1-carboxy-5-phosphooxy-5-oxopentan-1-yl)-L-glutamine + NADPH + H(+). It participates in amino-acid biosynthesis; L-lysine biosynthesis via AAA pathway; L-lysine from L-alpha-aminoadipate (Thermus route): step 3/5. Catalyzes the NADPH-dependent reduction of [LysW]-aminoadipate 6-phosphate to yield [LysW]-aminoadipate 6-semialdehyde. The polypeptide is Putative [LysW]-L-2-aminoadipate 6-phosphate reductase (Thermomicrobium roseum (strain ATCC 27502 / DSM 5159 / P-2)).